Reading from the N-terminus, the 410-residue chain is Adenosine receptor A2a (410 aa).

Residues 1-4 (MGSS) lie on the Extracellular side of the membrane. The helical transmembrane segment at 5 to 29 (VYITVELAIAVLAILGNVLVCWAVW) threads the bilayer. Residues 30–39 (INSNLQNVTN) are Cytoplasmic-facing. Residues 40 to 63 (FFVVSLAAADIAVGVLAIPFAITI) traverse the membrane as a helical segment. The Extracellular segment spans residues 64–74 (STGFCAACHGC). Disulfide bonds link cysteine 68–cysteine 154, cysteine 71–cysteine 143, and cysteine 74–cysteine 161. The chain crosses the membrane as a helical span at residues 75–97 (LFFACFVLVLTQSSIFSLLAIAI). Over 98–117 (DRYIAIRIPLRYNGLVTGVR) the chain is Cytoplasmic. The chain crosses the membrane as a helical span at residues 118–140 (AKGIIAICWVLSFAIGLTPMLGW). At 141–168 (NNCSQKDGNSTKTCGEGRVTCLFEDVVP) the chain is on the extracellular side. Residues asparagine 142 and asparagine 149 are each glycosylated (N-linked (GlcNAc...) asparagine). Glutamate 164 is an adenosine binding site. Residues 169 to 193 (MNYMVYYNFFAFVLLPLLLMLAIYL) form a helical membrane-spanning segment. The Cytoplasmic segment spans residues 194–229 (RIFLAARRQLKQMESQPLPGERTRSTLQKEVHAAKS). Residues 230–253 (LAIIVGLFALCWLPLHIINCFTFF) traverse the membrane as a helical segment. An adenosine-binding site is contributed by asparagine 248. Cysteine 254 and cysteine 257 are oxidised to a cystine. Residues 254–261 (CSTCRHAP) lie on the Extracellular side of the membrane. A helical membrane pass occupies residues 262 to 285 (PWLMYLAIILSHSNSVVNPFIYAY). The adenosine site is built by serine 272 and histidine 273. Residues 286 to 410 (RIREFRQTFR…SSWSSEFAPS (125 aa)) lie on the Cytoplasmic side of the membrane. Residues 322 to 410 (HSTEGEQVSL…SSWSSEFAPS (89 aa)) form an interaction with GAS2L2 region. The segment at 344–410 (GSATHSGRRP…SSWSSEFAPS (67 aa)) is disordered. Over residues 371 to 388 (RDVELPTQERQEGQEHPG) the composition is skewed to basic and acidic residues. The span at 401-410 (SSWSSEFAPS) shows a compositional bias: polar residues.

The protein belongs to the G-protein coupled receptor 1 family. In terms of assembly, interacts (via cytoplasmic C-terminal domain) with USP4; the interaction is direct. May interact with DRD4. Interacts with NECAB2. Interacts (via cytoplasmic C-terminal domain) with GAS2L2; interaction enhances receptor-mediated adenylyl cyclase activity. Post-translationally, ubiquitinated. Deubiquitinated by USP4; leading to stabilization and expression at the cell surface. As to expression, expressed in striatal neurons (at protein level).

Its subcellular location is the cell membrane. In terms of biological role, receptor for adenosine. The activity of this receptor is mediated by G proteins which activate adenylyl cyclase. The polypeptide is Adenosine receptor A2a (Adora2a) (Rattus norvegicus (Rat)).